An 80-amino-acid polypeptide reads, in one-letter code: Large ribosomal subunit protein uL30 (80 aa).

Belongs to the universal ribosomal protein uL30 family. In terms of assembly, part of the 50S ribosomal subunit.

This Vesicomyosocius okutanii subsp. Calyptogena okutanii (strain HA) protein is Large ribosomal subunit protein uL30.